The following is a 209-amino-acid chain: MSKVTQIAHPLILHKLALIRDKNTGSKDFRELVEEVAMLMAYEVTRDLQLKEVEIETPICKTKCKMLSGKKVAIVPILRAGLGMVGGMTSLIPAAKVGHIGLYRDEETLKPVEYFCKLPQDIGDRDVIVTDPMLATGGSAKDAITLLKQKGAKHIRLMCLVAAPEGIKEVMDEHPDVDIYVASVDEKLNEKGYVVPGLGDAGDRLYGTK.

5-phospho-alpha-D-ribose 1-diphosphate contacts are provided by residues arginine 79, arginine 104, and 131-139 (DPMLATGGS). Residues valine 194 and 199-201 (GDA) each bind uracil. A 5-phospho-alpha-D-ribose 1-diphosphate-binding site is contributed by aspartate 200.

The protein belongs to the UPRTase family. It depends on Mg(2+) as a cofactor.

The enzyme catalyses UMP + diphosphate = 5-phospho-alpha-D-ribose 1-diphosphate + uracil. It participates in pyrimidine metabolism; UMP biosynthesis via salvage pathway; UMP from uracil: step 1/1. With respect to regulation, allosterically activated by GTP. Catalyzes the conversion of uracil and 5-phospho-alpha-D-ribose 1-diphosphate (PRPP) to UMP and diphosphate. The protein is Uracil phosphoribosyltransferase of Clostridium botulinum (strain ATCC 19397 / Type A).